Reading from the N-terminus, the 248-residue chain is Membrane-spanning 4-domains subfamily A member 6A (248 aa).

Over M1–K46 the chain is Cytoplasmic. A helical transmembrane segment spans residues V47–A67. At S68–N84 the chain is on the extracellular side. Residues S85 to T105 traverse the membrane as a helical segment. Residues E106–S116 lie on the Cytoplasmic side of the membrane. Residues S117–V137 form a helical membrane-spanning segment. Residues K138–T185 lie on the Extracellular side of the membrane. The helical transmembrane segment at L186 to L206 threads the bilayer. Topologically, residues R207 to S248 are cytoplasmic.

Belongs to the MS4A family. In terms of tissue distribution, variable expression in some B-cell, myelomonocytic, and erythroleukemia cell lines.

The protein resides in the membrane. In terms of biological role, may be involved in signal transduction as a component of a multimeric receptor complex. The sequence is that of Membrane-spanning 4-domains subfamily A member 6A (MS4A6A) from Homo sapiens (Human).